The primary structure comprises 181 residues: Ribosome maturation factor RimM (181 aa).

One can recognise a PRC barrel domain in the interval 98–177 (EGEFFYCDLV…KITTHNAKTL (80 aa)).

The protein belongs to the RimM family. As to quaternary structure, binds ribosomal protein uS19.

The protein resides in the cytoplasm. In terms of biological role, an accessory protein needed during the final step in the assembly of 30S ribosomal subunit, possibly for assembly of the head region. Essential for efficient processing of 16S rRNA. May be needed both before and after RbfA during the maturation of 16S rRNA. It has affinity for free ribosomal 30S subunits but not for 70S ribosomes. This chain is Ribosome maturation factor RimM, found in Helicobacter pylori (strain HPAG1).